The sequence spans 484 residues: Threonine synthase-like 2 (484 aa).

Lysine 113 is modified (N6-(pyridoxal phosphate)lysine).

It belongs to the threonine synthase family. The cofactor is pyridoxal 5'-phosphate.

Its function is as follows. Acts as a catabolic phospho-lyase on both gamma- and beta-phosphorylated substrates. Degrades O-phospho-threonine (PThr) to alpha-ketobutyrate, ammonia and phosphate. This chain is Threonine synthase-like 2 (THNSL2), found in Pongo abelii (Sumatran orangutan).